A 171-amino-acid chain; its full sequence is 3-hydroxyanthranilate 3,4-dioxygenase (171 aa).

R44 is an O2 binding site. 3 residues coordinate Fe cation: H48, E54, and H92. E54 provides a ligand contact to substrate. Substrate-binding residues include R96 and E106. 4 residues coordinate a divalent metal cation: C121, C126, C160, and C163.

This sequence belongs to the 3-HAO family. It depends on Fe(2+) as a cofactor.

The protein localises to the cytoplasm. The enzyme catalyses 3-hydroxyanthranilate + O2 = (2Z,4Z)-2-amino-3-carboxymuconate 6-semialdehyde. It functions in the pathway cofactor biosynthesis; NAD(+) biosynthesis; quinolinate from L-kynurenine: step 3/3. Functionally, catalyzes the oxidative ring opening of 3-hydroxyanthranilate to 2-amino-3-carboxymuconate semialdehyde, which spontaneously cyclizes to quinolinate. The protein is 3-hydroxyanthranilate 3,4-dioxygenase of Yarrowia lipolytica (strain CLIB 122 / E 150) (Yeast).